A 55-amino-acid chain; its full sequence is Large ribosomal subunit protein bL32c (55 aa).

A disordered region spans residues 1 to 24 (MAVPKKRTSKSKKNARKANWKRKG).

It belongs to the bacterial ribosomal protein bL32 family.

It is found in the plastid. It localises to the chloroplast. This is Large ribosomal subunit protein bL32c from Phaeodactylum tricornutum (strain CCAP 1055/1).